The chain runs to 312 residues: tRNA dimethylallyltransferase (312 aa).

Residue 10-17 (GPTAVGKT) participates in ATP binding. 12 to 17 (TAVGKT) is a binding site for substrate. Positions 35 to 38 (DSMQ) are interaction with substrate tRNA.

The protein belongs to the IPP transferase family. As to quaternary structure, monomer. The cofactor is Mg(2+).

The catalysed reaction is adenosine(37) in tRNA + dimethylallyl diphosphate = N(6)-dimethylallyladenosine(37) in tRNA + diphosphate. Functionally, catalyzes the transfer of a dimethylallyl group onto the adenine at position 37 in tRNAs that read codons beginning with uridine, leading to the formation of N6-(dimethylallyl)adenosine (i(6)A). The protein is tRNA dimethylallyltransferase of Alkaliphilus metalliredigens (strain QYMF).